The chain runs to 385 residues: Transcription termination factor 2, mitochondrial (385 aa).

The N-terminal 35 residues, Met1–Tyr35, are a transit peptide targeting the mitochondrion.

Belongs to the mTERF family. As to quaternary structure, monomer.

Its subcellular location is the mitochondrion matrix. The protein localises to the mitochondrion nucleoid. Its function is as follows. Binds mitochondrial DNA and plays a role in the regulation of transcription of mitochondrial mRNA and rRNA species. This chain is Transcription termination factor 2, mitochondrial (Mterf2), found in Rattus norvegicus (Rat).